A 134-amino-acid chain; its full sequence is Large ribosomal subunit protein eL32 (134 aa).

This sequence belongs to the eukaryotic ribosomal protein eL32 family.

This chain is Large ribosomal subunit protein eL32 (RpL32), found in Drosophila affinis (Fruit fly).